The primary structure comprises 569 residues: AA9 family lytic polysaccharide monooxygenase A (569 aa).

The first 16 residues, 1–16, serve as a signal peptide directing secretion; the sequence is MRIFSLALGFLPLVAG. Cu(2+) is bound by residues His-17 and His-99. The cysteines at positions 59 and 189 are disulfide-linked. A glycan (N-linked (GlcNAc...) asparagine) is linked at Asn-112. O2 contacts are provided by His-174 and Gln-184. Tyr-186 provides a ligand contact to Cu(2+). N-linked (GlcNAc...) asparagine glycans are attached at residues Asn-244 and Asn-381. Positions 399 to 424 are enriched in low complexity; that stretch reads AADATATATATTEDAEATTAAEAAAT. Residues 399–439 are disordered; it reads AADATATATATTEDAEATTAAEAAATSGAGRPGRGHGHGRG. Residue Asn-472 is glycosylated (N-linked (GlcNAc...) asparagine).

Belongs to the polysaccharide monooxygenase AA9 family. Cu(2+) is required as a cofactor.

The protein localises to the secreted. It carries out the reaction [(1-&gt;4)-beta-D-glucosyl]n+m + reduced acceptor + O2 = 4-dehydro-beta-D-glucosyl-[(1-&gt;4)-beta-D-glucosyl]n-1 + [(1-&gt;4)-beta-D-glucosyl]m + acceptor + H2O.. Lytic polysaccharide monooxygenase (LPMO) that depolymerizes crystalline and amorphous polysaccharides via the oxidation of scissile alpha- or beta-(1-4)-glycosidic bonds, yielding C4 oxidation products. Catalysis by LPMOs requires the reduction of the active-site copper from Cu(II) to Cu(I) by a reducing agent and H(2)O(2) or O(2) as a cosubstrate. The sequence is that of AA9 family lytic polysaccharide monooxygenase A from Emericella nidulans (strain FGSC A4 / ATCC 38163 / CBS 112.46 / NRRL 194 / M139) (Aspergillus nidulans).